We begin with the raw amino-acid sequence, 697 residues long: Elongation factor G (697 aa).

One can recognise a tr-type G domain in the interval 10–285; it reads EKTRNIGIVA…GVNDYLPSPL (276 aa). GTP contacts are provided by residues 19 to 26, 83 to 87, and 137 to 140; these read AHIDAGKT, DTPGH, and NKMD.

The protein belongs to the TRAFAC class translation factor GTPase superfamily. Classic translation factor GTPase family. EF-G/EF-2 subfamily.

It is found in the cytoplasm. Catalyzes the GTP-dependent ribosomal translocation step during translation elongation. During this step, the ribosome changes from the pre-translocational (PRE) to the post-translocational (POST) state as the newly formed A-site-bound peptidyl-tRNA and P-site-bound deacylated tRNA move to the P and E sites, respectively. Catalyzes the coordinated movement of the two tRNA molecules, the mRNA and conformational changes in the ribosome. This Ligilactobacillus salivarius (strain UCC118) (Lactobacillus salivarius) protein is Elongation factor G.